The chain runs to 166 residues: Putative tRNA (cytidine(34)-2'-O)-methyltransferase (166 aa).

S-adenosyl-L-methionine contacts are provided by Leu83, Gly109, Ile130, and Ser138.

Belongs to the class IV-like SAM-binding methyltransferase superfamily. RNA methyltransferase TrmH family. TrmL subfamily.

It is found in the cytoplasm. The catalysed reaction is cytidine(34) in tRNA + S-adenosyl-L-methionine = 2'-O-methylcytidine(34) in tRNA + S-adenosyl-L-homocysteine + H(+). It carries out the reaction 5-carboxymethylaminomethyluridine(34) in tRNA(Leu) + S-adenosyl-L-methionine = 5-carboxymethylaminomethyl-2'-O-methyluridine(34) in tRNA(Leu) + S-adenosyl-L-homocysteine + H(+). In terms of biological role, could methylate the ribose at the nucleotide 34 wobble position in tRNA. The polypeptide is Putative tRNA (cytidine(34)-2'-O)-methyltransferase (Mycoplasma genitalium (strain ATCC 33530 / DSM 19775 / NCTC 10195 / G37) (Mycoplasmoides genitalium)).